Consider the following 433-residue polypeptide: Protein translocase subunit SecY (433 aa).

The next 10 membrane-spanning stretches (helical) occupy residues 17–37 (IIFT…PIPG), 71–91 (IFAL…LMSV), 117–137 (LTVL…ESMV), 141–161 (GPVV…TLVV), 184–204 (LIIF…MFEL), 212–232 (PLIA…IIFF), 268–288 (GVIP…LANF), 310–330 (YILL…AIVF), 366–386 (LTVI…LLMN), and 388–408 (YVIS…VVLD).

Belongs to the SecY/SEC61-alpha family. In terms of assembly, component of the Sec protein translocase complex. Heterotrimer consisting of SecY, SecE and SecG subunits. The heterotrimers can form oligomers, although 1 heterotrimer is thought to be able to translocate proteins. Interacts with the ribosome. Interacts with SecDF, and other proteins may be involved. Interacts with SecA.

It is found in the cell inner membrane. In terms of biological role, the central subunit of the protein translocation channel SecYEG. Consists of two halves formed by TMs 1-5 and 6-10. These two domains form a lateral gate at the front which open onto the bilayer between TMs 2 and 7, and are clamped together by SecE at the back. The channel is closed by both a pore ring composed of hydrophobic SecY resides and a short helix (helix 2A) on the extracellular side of the membrane which forms a plug. The plug probably moves laterally to allow the channel to open. The ring and the pore may move independently. In Rickettsia typhi (strain ATCC VR-144 / Wilmington), this protein is Protein translocase subunit SecY.